A 617-amino-acid chain; its full sequence is Dihydroxy-acid dehydratase (617 aa).

Aspartate 81 contributes to the Mg(2+) binding site. Position 122 (cysteine 122) interacts with [2Fe-2S] cluster. Positions 123 and 124 each coordinate Mg(2+). Lysine 124 carries the post-translational modification N6-carboxylysine. A [2Fe-2S] cluster-binding site is contributed by cysteine 195. A Mg(2+)-binding site is contributed by glutamate 492. Serine 518 (proton acceptor) is an active-site residue.

It belongs to the IlvD/Edd family. Homodimer. It depends on [2Fe-2S] cluster as a cofactor. Requires Mg(2+) as cofactor.

The catalysed reaction is (2R)-2,3-dihydroxy-3-methylbutanoate = 3-methyl-2-oxobutanoate + H2O. It carries out the reaction (2R,3R)-2,3-dihydroxy-3-methylpentanoate = (S)-3-methyl-2-oxopentanoate + H2O. It functions in the pathway amino-acid biosynthesis; L-isoleucine biosynthesis; L-isoleucine from 2-oxobutanoate: step 3/4. The protein operates within amino-acid biosynthesis; L-valine biosynthesis; L-valine from pyruvate: step 3/4. Functions in the biosynthesis of branched-chain amino acids. Catalyzes the dehydration of (2R,3R)-2,3-dihydroxy-3-methylpentanoate (2,3-dihydroxy-3-methylvalerate) into 2-oxo-3-methylpentanoate (2-oxo-3-methylvalerate) and of (2R)-2,3-dihydroxy-3-methylbutanoate (2,3-dihydroxyisovalerate) into 2-oxo-3-methylbutanoate (2-oxoisovalerate), the penultimate precursor to L-isoleucine and L-valine, respectively. The chain is Dihydroxy-acid dehydratase from Buchnera aphidicola subsp. Cinara cedri (strain Cc).